Consider the following 355-residue polypeptide: MFTLSDFDFNLPPELIAQTALPDRTASRLLEVDGSVAPARLVDRHFAELPSCIAPGDLLVFNDTKVLKARFFGQKASGGKIEVLIERVTGTHTALAQIRASKSPGAGTTLRLADAFDVTVGERVEPFFTLHFPAPCLDLIEQHGRLPLPPYIEHDADATDETRYQTVYASNPGAVAAPTAGLHFDQPLLDKLDAMGVERATLTLHVGAGTFQPVRVENIAEHKMHSEWYDLPQSLVDKIAATRARGGNVIAVGTTSMRALEAAARSADEAGRPLAATQAETDIFITPGYRFRVVDRLVTNFHLPKSTLLMLVSAFAGVETIRAAYRHAIEERYRFFSYGDAMLLTRRDTPEAPGA.

This sequence belongs to the QueA family. As to quaternary structure, monomer.

It localises to the cytoplasm. The enzyme catalyses 7-aminomethyl-7-carbaguanosine(34) in tRNA + S-adenosyl-L-methionine = epoxyqueuosine(34) in tRNA + adenine + L-methionine + 2 H(+). The protein operates within tRNA modification; tRNA-queuosine biosynthesis. Transfers and isomerizes the ribose moiety from AdoMet to the 7-aminomethyl group of 7-deazaguanine (preQ1-tRNA) to give epoxyqueuosine (oQ-tRNA). The polypeptide is S-adenosylmethionine:tRNA ribosyltransferase-isomerase (Burkholderia orbicola (strain AU 1054)).